The sequence spans 418 residues: UDP-N-acetylglucosamine 1-carboxyvinyltransferase (418 aa).

A phosphoenolpyruvate-binding site is contributed by 23 to 24 (KN). R93 provides a ligand contact to UDP-N-acetyl-alpha-D-glucosamine. Catalysis depends on D117, which acts as the Proton donor. UDP-N-acetyl-alpha-D-glucosamine contacts are provided by D305 and V327.

The protein belongs to the EPSP synthase family. MurA subfamily.

It is found in the cytoplasm. The catalysed reaction is phosphoenolpyruvate + UDP-N-acetyl-alpha-D-glucosamine = UDP-N-acetyl-3-O-(1-carboxyvinyl)-alpha-D-glucosamine + phosphate. It functions in the pathway cell wall biogenesis; peptidoglycan biosynthesis. Functionally, cell wall formation. Adds enolpyruvyl to UDP-N-acetylglucosamine. This Mycobacterium bovis (strain ATCC BAA-935 / AF2122/97) protein is UDP-N-acetylglucosamine 1-carboxyvinyltransferase.